The chain runs to 414 residues: Carbohydrate sulfotransferase 12 (414 aa).

Residues 1–5 are Cytoplasmic-facing; sequence MTKAR. The chain crosses the membrane as a helical; Signal-anchor for type II membrane protein span at residues 6 to 26; the sequence is LFRLWLVLGSVFMILLIIVYW. Over 27–414 the chain is Lumenal; that stretch reads DSAGAAHFYL…YPKPENLLRD (388 aa). Residues 80–125 are disordered; the sequence is QSDLPRKETEQPPAPGSMEESVRGYDWSPRDARRSPDQGRQQAERR. Residues 99 to 125 are compositionally biased toward basic and acidic residues; it reads ESVRGYDWSPRDARRSPDQGRQQAERR. Asparagine 134 is a glycosylation site (N-linked (GlcNAc...) asparagine). A 3'-phosphoadenylyl sulfate-binding site is contributed by 171-177; the sequence is PKVACTN. Asparagine 209 carries N-linked (GlcNAc...) asparagine glycosylation. 245 to 253 is a 3'-phosphoadenylyl sulfate binding site; the sequence is RDPFVRLIS. Asparagine 280 and asparagine 370 each carry an N-linked (GlcNAc...) asparagine glycan.

Belongs to the sulfotransferase 2 family. Widely expressed. Expressed a high level in spinal chord, heart, spleen, thyroid, pituitary gland, adrenal gland, peripheral blood leukocytes, thymus, lung, small intestine, fetal kidney, fetal spleen and fetal lung.

The protein resides in the golgi apparatus membrane. The enzyme catalyses chondroitin beta-D-glucuronate + n 3'-phosphoadenylyl sulfate = chondroitin 4'-sulfate + n adenosine 3',5'-bisphosphate + n H(+). Catalyzes the transfer of sulfate to position 4 of the N-acetylgalactosamine (GalNAc) residue of chondroitin and desulfated dermatan sulfate. Chondroitin sulfate constitutes the predominant proteoglycan present in cartilage and is distributed on the surfaces of many cells and extracellular matrices. Activity toward partially desulfated dermatan sulfate is however lower. Does not form 4, 6-di-O-sulfated GalNAc when chondroitin sulfate C is used as an acceptor. In Homo sapiens (Human), this protein is Carbohydrate sulfotransferase 12 (CHST12).